An 841-amino-acid polypeptide reads, in one-letter code: DNA ligase (841 aa).

Residues 54–58 (DAEYD), 103–104 (SL), and E143 contribute to the NAD(+) site. K145 acts as the N6-AMP-lysine intermediate in catalysis. 4 residues coordinate NAD(+): R166, E203, K321, and K345. Zn(2+) contacts are provided by C471, C474, C489, and C495. The disordered stretch occupies residues 554 to 575 (KTVAESDQMPSEGSSVGASGKH). Residues 561 to 570 (QMPSEGSSVG) show a composition bias toward polar residues. The region spanning 764–841 (GINKAVAGKT…SEAELLTLLG (78 aa)) is the BRCT domain.

It belongs to the NAD-dependent DNA ligase family. LigA subfamily. It depends on Mg(2+) as a cofactor. Requires Mn(2+) as cofactor.

It catalyses the reaction NAD(+) + (deoxyribonucleotide)n-3'-hydroxyl + 5'-phospho-(deoxyribonucleotide)m = (deoxyribonucleotide)n+m + AMP + beta-nicotinamide D-nucleotide.. Functionally, DNA ligase that catalyzes the formation of phosphodiester linkages between 5'-phosphoryl and 3'-hydroxyl groups in double-stranded DNA using NAD as a coenzyme and as the energy source for the reaction. It is essential for DNA replication and repair of damaged DNA. The chain is DNA ligase from Neisseria meningitidis serogroup C / serotype 2a (strain ATCC 700532 / DSM 15464 / FAM18).